A 105-amino-acid polypeptide reads, in one-letter code: Met repressor (105 aa).

It belongs to the MetJ family. In terms of assembly, homodimer.

Its subcellular location is the cytoplasm. In terms of biological role, this regulatory protein, when combined with SAM (S-adenosylmethionine) represses the expression of the methionine regulon and of enzymes involved in SAM synthesis. This Actinobacillus succinogenes (strain ATCC 55618 / DSM 22257 / CCUG 43843 / 130Z) protein is Met repressor.